Here is a 129-residue protein sequence, read N- to C-terminus: Small ribosomal subunit protein uS11 (129 aa).

This sequence belongs to the universal ribosomal protein uS11 family. As to quaternary structure, part of the 30S ribosomal subunit. Interacts with proteins S7 and S18. Binds to IF-3.

Its function is as follows. Located on the platform of the 30S subunit, it bridges several disparate RNA helices of the 16S rRNA. Forms part of the Shine-Dalgarno cleft in the 70S ribosome. The polypeptide is Small ribosomal subunit protein uS11 (Yersinia pseudotuberculosis serotype O:1b (strain IP 31758)).